Consider the following 203-residue polypeptide: ATP-dependent Clp protease proteolytic subunit (203 aa).

The active-site Nucleophile is Ser100. His125 is a catalytic residue.

It belongs to the peptidase S14 family. In terms of assembly, fourteen ClpP subunits assemble into 2 heptameric rings which stack back to back to give a disk-like structure with a central cavity, resembling the structure of eukaryotic proteasomes.

It is found in the cytoplasm. The enzyme catalyses Hydrolysis of proteins to small peptides in the presence of ATP and magnesium. alpha-casein is the usual test substrate. In the absence of ATP, only oligopeptides shorter than five residues are hydrolyzed (such as succinyl-Leu-Tyr-|-NHMec, and Leu-Tyr-Leu-|-Tyr-Trp, in which cleavage of the -Tyr-|-Leu- and -Tyr-|-Trp bonds also occurs).. Cleaves peptides in various proteins in a process that requires ATP hydrolysis. Has a chymotrypsin-like activity. Plays a major role in the degradation of misfolded proteins. The protein is ATP-dependent Clp protease proteolytic subunit of Anaeromyxobacter sp. (strain K).